A 1033-amino-acid chain; its full sequence is Collagen alpha-2(I) chain (1033 aa).

The tract at residues 1-1033 (SGGFDFSFLP…FGYEGDFYRA (1033 aa)) is disordered. 3 stretches are compositionally biased toward low complexity: residues 25-71 (LGPG…ARGP), 154-175 (SRGS…SAGP), and 221-242 (PGAN…AGAP). The segment covering 276 to 285 (GESGGKGEPG) has biased composition (gly residues). Residues 286-296 (SAGPQGPPGSS) show a composition bias toward low complexity. Residues 318-327 (GLRGGPGSRG) show a composition bias toward gly residues. Composition is skewed to low complexity over residues 340-356 (PAGA…RGPS) and 391-410 (LPGI…RGEA). Positions 459-468 (GVQGGKGEQG) are enriched in gly residues. 2 stretches are compositionally biased toward low complexity: residues 519-528 (PSGAIGSRGP) and 540-550 (EPGVVGAPGTA). The span at 551 to 560 (GPAGSGGLPG) shows a compositional bias: gly residues. 2 stretches are compositionally biased toward low complexity: residues 583–627 (VGTT…PRGS) and 634–654 (VGPA…QPGA). Over residues 655-664 (KGERGTKGPK) the composition is skewed to basic and acidic residues. A compositionally biased stretch (low complexity) spans 672 to 682 (PTGPVGSAGPA). The span at 692 to 701 (GSRGDGGPPG) shows a compositional bias: gly residues. A compositionally biased stretch (low complexity) spans 703-712 (TGFPGAAGRT). Positions 749–758 (GETGAGGPPG) are enriched in gly residues. 2 stretches are compositionally biased toward low complexity: residues 766–793 (SGEP…LGLP) and 801–811 (LPGVAGAVGEP). The segment covering 812–834 (GPLGIGPPGARGPSGGVGPGVNG) has biased composition (gly residues). Positions 873–909 (AAGAPGPHGAVGPAGKHGNRGEPGPVGSAGPVGALGP) are enriched in low complexity. The segment covering 919–930 (RGDKGEAGDKGP) has biased composition (basic and acidic residues). Pro residues predominate over residues 1003-1015 (SGPPGPPGPPGPP).

The protein belongs to the fibrillar collagen family. Trimers of one alpha 2(I) and two alpha 1(I) chains. Interacts (via C-terminus) with TMEM131 (via PapD-L domain); the interaction is direct and is involved in assembly and TRAPPIII ER-to-Golgi transport complex-dependent secretion of collagen. Prolines at the third position of the tripeptide repeating unit (G-X-Y) are hydroxylated in some or all of the chains. As to expression, expressed in bone.

The protein localises to the secreted. It is found in the extracellular space. The protein resides in the extracellular matrix. In terms of biological role, type I collagen is a member of group I collagen (fibrillar forming collagen). The polypeptide is Collagen alpha-2(I) chain (Mylodon darwinii (Giant ground sloth)).